Reading from the N-terminus, the 205-residue chain is Bcl2-associated agonist of cell death (205 aa).

A disordered region spans residues 1 to 139; that stretch reads MGTPKQPSLA…PFRGRSRSAP (139 aa). Serine 67 carries the post-translational modification Phosphoserine. Polar residues predominate over residues 85–98; sequence IVQQQPGQAANNSH. Residue serine 113 is modified to Phosphoserine. Acidic residues predominate over residues 118–128; the sequence is TEEDEGMEEEL. Serine 129 is modified (phosphoserine). Arginine 132 and arginine 134 each carry asymmetric dimethylarginine; by PRMT1. Serine 135 bears the Phosphoserine mark. At serine 137 the chain carries Phosphoserine; by PKA, PKB, PAK1, RPS6KA1, RPS6KB1 and PKC/PRKCQ. The BH3 signature appears at 148-162; the sequence is YGRELRRMSDEFEGS. Serine 156 and serine 171 each carry phosphoserine. The segment at 161–180 is disordered; the sequence is GSFKGLPRPKSAGTATQMRQ.

Belongs to the Bcl-2 family. As to quaternary structure, forms heterodimers with the anti-apoptotic proteins, Bcl-X(L), Bcl-2 and Bcl-W. Also binds protein S100A10. The Ser-113/Ser-137 phosphorylated form binds 14-3-3 proteins. Interacts with AKT1 and PIM3. Interacts with HIF3A (via C-terminus domain); the interaction reduces the binding between BAD and BAX. Interacts (via BH3 domain) with NOL3 (via CARD domain); preventing the association of BAD with BCL2. Interacts with GIMAP3/IAN4 and GIMAP5/IAN5. Phosphorylated at one or more of Ser-113, Ser-137, Ser-156 and Ser-171 in response to survival stimuli, which blocks its pro-apoptotic activity. Phosphorylation on Ser-137 or Ser-113 promotes heterodimerization with 14-3-3 proteins. This interaction then facilitates the phosphorylation at Ser-156, a site within the BH3 motif, leading to the release of Bcl-X(L) and the promotion of cell survival. Ser-137 is the major site of AKT/PKB phosphorylation, Ser-156 the major site of protein kinase A (CAPK) phosphorylation. In terms of processing, methylation at Arg-132 and Arg-134 by PRMT1 inhibits Akt-mediated phosphorylation at Ser-137. In terms of tissue distribution, expressed in all tissues tested, including brain, liver, spleen and heart. In the brain, restricted to epithelial cells of the choroid plexus. Isoform alpha is the more abundant form.

It is found in the mitochondrion outer membrane. It localises to the cytoplasm. In terms of biological role, promotes cell death. Successfully competes for the binding to Bcl-X(L), Bcl-2 and Bcl-W, thereby affecting the level of heterodimerization of these proteins with BAX. Can reverse the death repressor activity of Bcl-X(L), but not that of Bcl-2. Appears to act as a link between growth factor receptor signaling and the apoptotic pathways. This chain is Bcl2-associated agonist of cell death (Bad), found in Rattus norvegicus (Rat).